The following is a 155-amino-acid chain: uncharacterized protein (155 aa).

Positions 37 to 140 (IAELRKKLNL…GGYRLKTTDN (104 aa)) constitute an SCP domain.

This is an uncharacterized protein from Borreliella burgdorferi (strain ATCC 35210 / DSM 4680 / CIP 102532 / B31) (Borrelia burgdorferi).